The following is a 657-amino-acid chain: Protein translocase subunit SecA 2 (657 aa).

ATP contacts are provided by residues Q93, 111–115 (GEGKT), and D531.

This sequence belongs to the SecA family. Monomer and homodimer. Part of the essential Sec protein translocation apparatus which comprises SecA, SecYEG and auxiliary proteins SecDF. Other proteins may also be involved.

It localises to the cell inner membrane. The protein resides in the cytoplasm. It carries out the reaction ATP + H2O + cellular proteinSide 1 = ADP + phosphate + cellular proteinSide 2.. In terms of biological role, part of the Sec protein translocase complex. Interacts with the SecYEG preprotein conducting channel. Has a central role in coupling the hydrolysis of ATP to the transfer of proteins into and across the cell membrane, serving as an ATP-driven molecular motor driving the stepwise translocation of polypeptide chains across the membrane. The chain is Protein translocase subunit SecA 2 from Rhodopirellula baltica (strain DSM 10527 / NCIMB 13988 / SH1).